Consider the following 267-residue polypeptide: Mediator of RNA polymerase II transcription subunit 18 (267 aa).

It belongs to the Mediator complex subunit 18 family. In terms of assembly, component of the Mediator complex.

The protein localises to the nucleus. Functionally, component of the Mediator complex, a coactivator involved in the regulated transcription of nearly all RNA polymerase II-dependent genes. Mediator functions as a bridge to convey information from gene-specific regulatory proteins to the basal RNA polymerase II transcription machinery. Mediator is recruited to promoters by direct interactions with regulatory proteins and serves as a scaffold for the assembly of a functional preinitiation complex with RNA polymerase II and the general transcription factors. In Coccidioides immitis (strain RS) (Valley fever fungus), this protein is Mediator of RNA polymerase II transcription subunit 18 (SRB5).